A 1013-amino-acid chain; its full sequence is MTSSEQWRAFLHQCLMRRIDAAEFKNLSKILFRRCPTAEGTLLDVLLEIRLATGIKWDPLLPLYIDCLCKMGKVQTSTVLTSLLKYSSIHDKPQSPSSETVQSKMALKCYTLMTDIRVIQDAMLSVSTGSTPKSLAEAVGIFSAIIDWIQAVVAWHNNHIDPSQQTGGLMSSPDAVSLFESLGILLTALSGTGKGIEVLSSDSHEALKVKLGQALSAYLPLCMEVSLPLRNRLDSLQKGFNLYGEPPNKSLQSMMDNVNVNALQFEASVMDGPVINSRAGLYIYINAMLVGRPLVDDSMLLNYLTNRYGGHYDVLVEEVITATFDVLSNALYRNESSRTMFLFRSFLVNKLPSFFAAMLAASMVSLPMEMCISHALSRLDPNTFPSFSQMFAMQGSTVLSEVRPEFLFACASHKLIPESSIERLLGENPMQTPPVGYNKDDLVSQINTNQERAEQLVSELESTEGNAGAIVAAITEVMHNLCNQKETMTLKSICNSLSRRPQALDVILLFRSAKQVLQPLCALLDSWHWDEDQGESQPVYDEFGSILLLVLTFKYRYDLRPYDLGITSNDSFVLKLLDCGSSSQNLDDLSEKQNRNLGAWITALFIAEGISEETMSSCSPQEFYLLVTTLFNQSLTACEAGKLEFDTLKGGFEYLLEPFLLPSLVVALTWLGNHIWETESDPTIPLKTLQSLVNPSSISGDAREIHKTVLNITARSLDEQLKDIRSRHPNRADIKPILDVLEPCLSFQRTGSCHRSELDSWTTHSPGGLLGSIRSTFQGLVLWSTSPGVSMAPHSYTHRQLVAGIRMLGSARVLTAIVDELKMQTETGNADLALDIAVTMICAPLAESFAIEQSNYHPVDPNKEPLPRCPVLTLRDALNLQHENVPKLSEKDPLRAEVIVRLYRRVNALMTPTSQMPNLDMSNIIQDMQLGVEDHGQMDLEPAGAGHGVGDDDAANLNRMLDNAAAAAAAGLDSGMGQGMGGGLDTSIDDVLNAADMAVGNPEFLDLDMEGMF.

The protein belongs to the Mediator complex subunit 5 family. In terms of assembly, component of the Mediator complex.

It localises to the nucleus. Functionally, component of the Mediator complex, a coactivator involved in the regulated transcription of nearly all RNA polymerase II-dependent genes. Mediator functions as a bridge to convey information from gene-specific regulatory proteins to the basal RNA polymerase II transcription machinery. Mediator is recruited to promoters by direct interactions with regulatory proteins and serves as a scaffold for the assembly of a functional preinitiation complex with RNA polymerase II and the general transcription factors. The protein is Mediator of RNA polymerase II transcription subunit 5 (NUT1) of Aspergillus oryzae (strain ATCC 42149 / RIB 40) (Yellow koji mold).